Reading from the N-terminus, the 136-residue chain is Galectin-7 (136 aa).

Positions 6–136 constitute a Galectin domain; sequence HKSSLPEGIR…DVQLDSVRIF (131 aa). A beta-D-galactoside is bound at residue 70–76; sequence WGREERG.

Monomer. Mainly expressed in stratified squamous epithelium.

The protein resides in the cytoplasm. It is found in the nucleus. The protein localises to the secreted. Functionally, could be involved in cell-cell and/or cell-matrix interactions necessary for normal growth control. Pro-apoptotic protein that functions intracellularly upstream of JNK activation and cytochrome c release. This Homo sapiens (Human) protein is Galectin-7 (LGALS7).